Here is a 565-residue protein sequence, read N- to C-terminus: Berberine bridge enzyme-like C-2 (565 aa).

The N-terminal stretch at 1–17 (MFPIIILISFSFTFLFA) is a signal peptide. 2 N-linked (GlcNAc...) asparagine glycosylation sites follow: Asn-28 and Asn-40. Residues Cys-32 and Cys-94 are joined by a disulfide bond. One can recognise an FAD-binding PCMH-type domain in the interval 72 to 248 (YMPKPTVIIL…YAWKIRLLKV (177 aa)). His-109 bears the Pros-8alpha-FAD histidine mark. 2 N-linked (GlcNAc...) asparagine glycosylation sites follow: Asn-363 and Asn-502.

The protein belongs to the oxygen-dependent FAD-linked oxidoreductase family. The cofactor is FAD.

The protein localises to the vacuole. The protein operates within alkaloid biosynthesis; nicotine biosynthesis. Functionally, involved in the biosynthesis of pyridine alkaloid natural products, leading mainly to the production of anabasine, anatabine, nicotine and nornicotine, effective deterrents against herbivores with antiparasitic and pesticide properties (neurotoxins); nornicotine serves as the precursor in the synthesis of the carcinogen compound N'-nitrosonornicotine (NNN). Catalyzes a late oxidation step subsequent to the pyridine ring condensation reaction in the biosynthesis of alkaloids. In Nicotiana tabacum (Common tobacco), this protein is Berberine bridge enzyme-like C-2.